The primary structure comprises 230 residues: Orotidine 5'-phosphate decarboxylase (230 aa).

Residues D16, K38, 65–74 (DLKLHDIGNT), T119, R180, Q189, G209, and R210 each bind substrate. K67 serves as the catalytic Proton donor.

It belongs to the OMP decarboxylase family. Type 1 subfamily. As to quaternary structure, homodimer.

The enzyme catalyses orotidine 5'-phosphate + H(+) = UMP + CO2. Its pathway is pyrimidine metabolism; UMP biosynthesis via de novo pathway; UMP from orotate: step 2/2. Functionally, catalyzes the decarboxylation of orotidine 5'-monophosphate (OMP) to uridine 5'-monophosphate (UMP). In Methylobacterium radiotolerans (strain ATCC 27329 / DSM 1819 / JCM 2831 / NBRC 15690 / NCIMB 10815 / 0-1), this protein is Orotidine 5'-phosphate decarboxylase.